The primary structure comprises 379 residues: 3-dehydroquinate synthase (379 aa).

Residues P67–K72, G101–D105, T125–T126, K138, and K147 contribute to the NAD(+) site. Residues E180, H242, and H258 each coordinate Zn(2+).

Belongs to the sugar phosphate cyclases superfamily. Dehydroquinate synthase family. Requires NAD(+) as cofactor. It depends on Co(2+) as a cofactor. Zn(2+) serves as cofactor.

The protein resides in the cytoplasm. The enzyme catalyses 7-phospho-2-dehydro-3-deoxy-D-arabino-heptonate = 3-dehydroquinate + phosphate. It functions in the pathway metabolic intermediate biosynthesis; chorismate biosynthesis; chorismate from D-erythrose 4-phosphate and phosphoenolpyruvate: step 2/7. Its function is as follows. Catalyzes the conversion of 3-deoxy-D-arabino-heptulosonate 7-phosphate (DAHP) to dehydroquinate (DHQ). In Chlamydia felis (strain Fe/C-56) (Chlamydophila felis), this protein is 3-dehydroquinate synthase.